The primary structure comprises 225 residues: Plasma membrane-associated cation-binding protein 1 (225 aa).

The N-myristoyl glycine moiety is linked to residue Gly2. The residue at position 32 (Thr32) is a Phosphothreonine. The residue at position 107 (Ser107) is a Phosphoserine. Basic and acidic residues predominate over residues 140–197 (PVEEVKAEEPAKTEEPAKTEGTSGEKEEIVEETKKGETPETAVVEEKKPEVEEKKEEA). The segment at 140–225 (PVEEVKAEEP…TAPVAEPPKP (86 aa)) is disordered. 2 positions are modified to phosphothreonine: Thr152 and Thr177.

The protein belongs to the DREPP family. Interacts with Turnip mosaic virus (TuMV) P3N-PIPO. Cu(2+) serves as cofactor. As to expression, mostly expressed in the basal region of hypocotyls. Expressed in seedlings, roots, shoots, stems, leaves (e.g. in epidermis and vascular tissues), flowers (e.g. in pistils and anthers) and siliques (at protein level).

The protein localises to the cell membrane. It is found in the cytoplasm. It localises to the cytoskeleton. The protein resides in the cell junction. Its subcellular location is the plasmodesma. May be involved in intracellular signaling through interaction with PtdInsPs and calmodulin (CaM); may keep PtdInsPs attached to the plasma membrane until Ca(2+)-CaM reaches a competitive concentration subsequent to an increase triggered by a stimulus, thus leading to PtdInsPs release and subsequent activation of InsPs-dependent signaling cascade. Interacts competitively at the N-terminus with calcium ions and CaM (in a calcium-dependent manner), and with the phosphatidylinositol phosphates PtdIns(3,4,5)P(3), PtdIns(3,4)P(2), PtdIns(4,5)P(2) and PtdIns(3,5)P(2). Also binds weakly to PtdIns(3)P, PtdIns(4)P and PtdIns(5)P. Negative regulator of hypocotyl cell elongation by destabilizing cortical microtubules in a calcium-dependent manner. Binds directly to and destabilized microtubules to enhance microtubule depolymerization when cytoplasmic calcium increases. In case of Turnip mosaic virus (TuMV) infection, confers sensitivity by promoting viral cell-to-cell movement through interaction with viral P3N-PIPO. In Arabidopsis thaliana (Mouse-ear cress), this protein is Plasma membrane-associated cation-binding protein 1 (PCAP1).